Here is a 313-residue protein sequence, read N- to C-terminus: Probable cell division protein WhiA (313 aa).

The segment at residues 277-311 (SLKEVAAQVPDGPISKSGVNHRFQKIREMAQQLKE) is a DNA-binding region (H-T-H motif).

The protein belongs to the WhiA family.

Its function is as follows. Involved in cell division and chromosome segregation. The protein is Probable cell division protein WhiA of Lactobacillus gasseri (strain ATCC 33323 / DSM 20243 / BCRC 14619 / CIP 102991 / JCM 1131 / KCTC 3163 / NCIMB 11718 / NCTC 13722 / AM63).